We begin with the raw amino-acid sequence, 550 residues long: Thermosome subunit (550 aa).

Residues 529-550 (KEKEGEKGGGGSEDFSSSSDLD) are disordered. Positions 541 to 550 (EDFSSSSDLD) are enriched in low complexity.

It belongs to the TCP-1 chaperonin family. As to quaternary structure, forms an oligomeric complex of eight-membered rings.

Molecular chaperone; binds unfolded polypeptides in vitro, and has a weak ATPase activity. The sequence is that of Thermosome subunit (ths) from Pyrococcus abyssi (strain GE5 / Orsay).